The primary structure comprises 338 residues: Glyceraldehyde-3-phosphate dehydrogenase (338 aa).

Residues 13–14 (RI), Asp35, and Arg80 each bind NAD(+). D-glyceraldehyde 3-phosphate contacts are provided by residues 151 to 153 (SCT), Thr182, 211 to 212 (TG), and Arg234. The active-site Nucleophile is Cys152. An NAD(+)-binding site is contributed by Asn317.

It belongs to the glyceraldehyde-3-phosphate dehydrogenase family. Homotetramer.

Its subcellular location is the cytoplasm. The enzyme catalyses D-glyceraldehyde 3-phosphate + phosphate + NAD(+) = (2R)-3-phospho-glyceroyl phosphate + NADH + H(+). It functions in the pathway carbohydrate degradation; glycolysis; pyruvate from D-glyceraldehyde 3-phosphate: step 1/5. In Aspergillus oryzae (strain ATCC 42149 / RIB 40) (Yellow koji mold), this protein is Glyceraldehyde-3-phosphate dehydrogenase (gpdA).